The primary structure comprises 190 residues: Large ribosomal subunit protein bL25 (190 aa).

The protein belongs to the bacterial ribosomal protein bL25 family. CTC subfamily. In terms of assembly, part of the 50S ribosomal subunit; part of the 5S rRNA/L5/L18/L25 subcomplex. Contacts the 5S rRNA. Binds to the 5S rRNA independently of L5 and L18.

Functionally, this is one of the proteins that binds to the 5S RNA in the ribosome where it forms part of the central protuberance. The chain is Large ribosomal subunit protein bL25 from Neisseria gonorrhoeae (strain ATCC 700825 / FA 1090).